Here is a 341-residue protein sequence, read N- to C-terminus: Small ribosomal subunit biogenesis GTPase RsgA (341 aa).

The CP-type G domain occupies 112–268; it reads RQQLIAANLD…LIDTPGMREL (157 aa). Residues 157–160 and 210–218 contribute to the GTP site; these read TKVD and GSSGAGKST. Zn(2+)-binding residues include C290, C295, H297, and C303.

The protein belongs to the TRAFAC class YlqF/YawG GTPase family. RsgA subfamily. Monomer. Associates with 30S ribosomal subunit, binds 16S rRNA. Zn(2+) serves as cofactor.

The protein resides in the cytoplasm. Its function is as follows. One of several proteins that assist in the late maturation steps of the functional core of the 30S ribosomal subunit. Helps release RbfA from mature subunits. May play a role in the assembly of ribosomal proteins into the subunit. Circularly permuted GTPase that catalyzes slow GTP hydrolysis, GTPase activity is stimulated by the 30S ribosomal subunit. This chain is Small ribosomal subunit biogenesis GTPase RsgA, found in Xylella fastidiosa (strain 9a5c).